We begin with the raw amino-acid sequence, 218 residues long: Recombination protein RecR (218 aa).

The C4-type zinc-finger motif lies at 56–71; the sequence is CRICCNISRDEVCRIC. The region spanning 79–195 is the Toprim domain; sequence GLICVVEEPK…VVSRLASGMP (117 aa).

The protein belongs to the RecR family.

In terms of biological role, may play a role in DNA repair. It seems to be involved in an RecBC-independent recombinational process of DNA repair. It may act with RecF and RecO. In Corynebacterium efficiens (strain DSM 44549 / YS-314 / AJ 12310 / JCM 11189 / NBRC 100395), this protein is Recombination protein RecR.